A 206-amino-acid polypeptide reads, in one-letter code: Small ribosomal subunit protein uS4 (206 aa).

Residues Cys96–Ala156 form the S4 RNA-binding domain.

This sequence belongs to the universal ribosomal protein uS4 family. As to quaternary structure, part of the 30S ribosomal subunit. Contacts protein S5. The interaction surface between S4 and S5 is involved in control of translational fidelity.

One of the primary rRNA binding proteins, it binds directly to 16S rRNA where it nucleates assembly of the body of the 30S subunit. Functionally, with S5 and S12 plays an important role in translational accuracy. The protein is Small ribosomal subunit protein uS4 of Ectopseudomonas mendocina (strain ymp) (Pseudomonas mendocina).